A 363-amino-acid chain; its full sequence is Heme A synthase (363 aa).

Transmembrane regions (helical) follow at residues 21 to 41 (ALVR…VLVG), 107 to 127 (RLLA…FWVS), 138 to 158 (LVGI…MVAS), 174 to 194 (HLTL…GLAP), 207 to 227 (LAGF…LVAG), 268 to 288 (FVHR…MIAT), 301 to 321 (ATLL…TLLM), and 323 to 343 (VPLH…GFAA). Histidine 270 is a binding site for heme. A heme-binding site is contributed by histidine 331.

Belongs to the COX15/CtaA family. Type 2 subfamily. In terms of assembly, interacts with CtaB. Heme b serves as cofactor.

The protein resides in the cell membrane. The enzyme catalyses Fe(II)-heme o + 2 A + H2O = Fe(II)-heme a + 2 AH2. Its pathway is porphyrin-containing compound metabolism; heme A biosynthesis; heme A from heme O: step 1/1. In terms of biological role, catalyzes the conversion of heme O to heme A by two successive hydroxylations of the methyl group at C8. The first hydroxylation forms heme I, the second hydroxylation results in an unstable dihydroxymethyl group, which spontaneously dehydrates, resulting in the formyl group of heme A. This Mesorhizobium japonicum (strain LMG 29417 / CECT 9101 / MAFF 303099) (Mesorhizobium loti (strain MAFF 303099)) protein is Heme A synthase.